The primary structure comprises 231 residues: Large ribosomal subunit protein uL3 (231 aa).

Gln151 carries the post-translational modification N5-methylglutamine.

Belongs to the universal ribosomal protein uL3 family. Part of the 50S ribosomal subunit. Forms a cluster with proteins L14 and L19. Post-translationally, methylated by PrmB.

One of the primary rRNA binding proteins, it binds directly near the 3'-end of the 23S rRNA, where it nucleates assembly of the 50S subunit. This is Large ribosomal subunit protein uL3 from Ehrlichia canis (strain Jake).